The sequence spans 902 residues: Alanine--tRNA ligase (902 aa).

Zn(2+) contacts are provided by His567, His571, Cys671, and His675.

It belongs to the class-II aminoacyl-tRNA synthetase family. Zn(2+) serves as cofactor.

It is found in the cytoplasm. It catalyses the reaction tRNA(Ala) + L-alanine + ATP = L-alanyl-tRNA(Ala) + AMP + diphosphate. Functionally, catalyzes the attachment of alanine to tRNA(Ala) in a two-step reaction: alanine is first activated by ATP to form Ala-AMP and then transferred to the acceptor end of tRNA(Ala). Also edits incorrectly charged Ser-tRNA(Ala) and Gly-tRNA(Ala) via its editing domain. The chain is Alanine--tRNA ligase from Mycoplasmoides gallisepticum (strain R(low / passage 15 / clone 2)) (Mycoplasma gallisepticum).